Here is a 344-residue protein sequence, read N- to C-terminus: Laforin, isoform 9 (344 aa).

Disordered regions lie at residues 1–44 (MHPK…PGPG), 58–134 (GGGA…PRGH), 158–188 (PAPG…RRAS), and 320–344 (SLKK…QCAT). The segment covering 77–88 (AARAGALGAARC) has biased composition (low complexity). Positions 101–131 (RGPGPAGAGPVARGGGAGGRGGGAGRGGAGP) are enriched in gly residues. Residues 179-188 (RPRRPRRRAS) show a composition bias toward basic residues.

As to quaternary structure, interacts with isoform 1 and isoform 2.

Its subcellular location is the nucleus. In Homo sapiens (Human), this protein is Laforin, isoform 9.